The chain runs to 70 residues: Protein SlyX homolog (70 aa).

This sequence belongs to the SlyX family.

In Shewanella sp. (strain MR-7), this protein is Protein SlyX homolog.